Consider the following 128-residue polypeptide: MAYRKLGRTSSQRKAMLRDLTTDLLINESIVTTEARAKEIRKTVEKMITLGKRGDLHARRQAAAFVRNEIASENYDEATEKYTTTTALQKLFSEIAPRYAERNGGYTRILKTEPRRGDAAPMAIIELV.

Belongs to the bacterial ribosomal protein bL17 family. In terms of assembly, part of the 50S ribosomal subunit. Contacts protein L32.

This chain is Large ribosomal subunit protein bL17, found in Streptococcus sanguinis (strain SK36).